Consider the following 110-residue polypeptide: MQAKASANMVRLAPRKARLVVDLIRGKQVGEALSVLAHTNKAASPVVEKVLKSAIANAEHNYDMNIENLVVTEAYVNEGPTLKRFRPRAMGRASRINKRTSHIHIVVTEK.

It belongs to the universal ribosomal protein uL22 family. As to quaternary structure, part of the 50S ribosomal subunit.

Its function is as follows. This protein binds specifically to 23S rRNA; its binding is stimulated by other ribosomal proteins, e.g. L4, L17, and L20. It is important during the early stages of 50S assembly. It makes multiple contacts with different domains of the 23S rRNA in the assembled 50S subunit and ribosome. Functionally, the globular domain of the protein is located near the polypeptide exit tunnel on the outside of the subunit, while an extended beta-hairpin is found that lines the wall of the exit tunnel in the center of the 70S ribosome. This is Large ribosomal subunit protein uL22 from Exiguobacterium sp. (strain ATCC BAA-1283 / AT1b).